Here is a 98-residue protein sequence, read N- to C-terminus: NADH-ubiquinone oxidoreductase chain 4L (98 aa).

The next 3 membrane-spanning stretches (helical) occupy residues 1-21 (MSIVYMNVMLAFMIALIGTLL), 29-49 (SLMCLEGMMLAMYIFISLISL), and 59-79 (VPLIILVFAACEAALGLALLV).

The protein belongs to the complex I subunit 4L family. Core subunit of respiratory chain NADH dehydrogenase (Complex I) which is composed of 45 different subunits.

The protein localises to the mitochondrion inner membrane. It catalyses the reaction a ubiquinone + NADH + 5 H(+)(in) = a ubiquinol + NAD(+) + 4 H(+)(out). Functionally, core subunit of the mitochondrial membrane respiratory chain NADH dehydrogenase (Complex I) which catalyzes electron transfer from NADH through the respiratory chain, using ubiquinone as an electron acceptor. Part of the enzyme membrane arm which is embedded in the lipid bilayer and involved in proton translocation. This is NADH-ubiquinone oxidoreductase chain 4L (MT-ND4L) from Hemiechinus auritus (Long-eared hedgehog).